We begin with the raw amino-acid sequence, 243 residues long: Zinc import ATP-binding protein ZnuC (243 aa).

The ABC transporter domain maps to 8–225; the sequence is LNLSNVSYYI…SEFQKLFGHH (218 aa). 40-47 is an ATP binding site; sequence GPNGAGKS.

The protein belongs to the ABC transporter superfamily. Zinc importer (TC 3.A.1.15.5) family. As to quaternary structure, the complex is composed of two ATP-binding proteins (ZnuC), two transmembrane proteins (ZnuB) and a solute-binding protein (ZnuA).

Its subcellular location is the cell inner membrane. The enzyme catalyses Zn(2+)(out) + ATP(in) + H2O(in) = Zn(2+)(in) + ADP(in) + phosphate(in) + H(+)(in). Part of the ABC transporter complex ZnuABC involved in zinc import. Responsible for energy coupling to the transport system. This chain is Zinc import ATP-binding protein ZnuC, found in Psychrobacter arcticus (strain DSM 17307 / VKM B-2377 / 273-4).